Reading from the N-terminus, the 160-residue chain is Nucleotide-binding protein TERTU_3542 (160 aa).

This sequence belongs to the YajQ family.

Functionally, nucleotide-binding protein. The polypeptide is Nucleotide-binding protein TERTU_3542 (Teredinibacter turnerae (strain ATCC 39867 / T7901)).